We begin with the raw amino-acid sequence, 285 residues long: MAADGTLSRGGVGEAVEEEHPGALEPGAAPFGNFPHYSRFHPPEQRLRLLPPELLRQLFPPEGPEKRPILGLDVGCNSGDLSVALYKHFLSPRDGETCSGASRELRILCCDIDPVLVERAERDCPFPEALTFITLDIMDQESRKVPLSSFLSQFGRSVFDMVFCMSVTMWIHLNHGDRGLCEFLAHVSSLCSYLLVEPQPWKCYRAAARRLRKLGLHSFDHFRSLAIRGDMAKQIVRILTQDHGMELACCFGNTSWDRSLLLFRAKHTHETQAIPESSTKETRTD.

Residues Arg46, Asn77, Asp111, 136-137 (DI), and Met165 each bind S-adenosyl-L-methionine. One can recognise a Bin3-type SAM domain in the interval 53–275 (ELLRQLFPPE…KHTHETQAIP (223 aa)).

This sequence belongs to the methyltransferase superfamily. In terms of assembly, interacts with DICER1; the interaction may be mediated by RNA.

It is found in the cytoplasm. It catalyses the reaction a 5'-end 5'-phospho-ribonucleoside-RNA + S-adenosyl-L-methionine = a 5'-end (5'-methylphospho)-ribonucleoside-RNA + S-adenosyl-L-homocysteine. The enzyme catalyses a 5'-end 5'-phospho-ribonucleoside-RNA + 2 S-adenosyl-L-methionine = a 5'-end (5'-bismethylphospho)-ribonucleoside-RNA + 2 S-adenosyl-L-homocysteine. Its function is as follows. O-methyltransferase that specifically monomethylates 5'-monophosphate of cytoplasmic histidyl tRNA (tRNA(His)), acting as a capping enzyme by protecting tRNA(His) from cleavage by DICER1. Also able, with less efficiently, to methylate the 5' monophosphate of a subset of pre-miRNAs, acting as a negative regulator of miRNA processing. The 5' monophosphate of pre-miRNAs is recognized by DICER1 and is required for pre-miRNAs processing: methylation at this position reduces the processing of pre-miRNAs by DICER1. Was also reported to mediate dimethylation of pre-miR-145; however dimethylation cannot be reproduced by another group which observes a monomethylation of pre-miR-145. The sequence is that of RNA 5'-monophosphate methyltransferase from Mus musculus (Mouse).